Consider the following 456-residue polypeptide: 3-isopropylmalate dehydratase large subunit (456 aa).

[4Fe-4S] cluster is bound by residues C336, C396, and C399.

It belongs to the aconitase/IPM isomerase family. LeuC type 1 subfamily. In terms of assembly, heterodimer of LeuC and LeuD. It depends on [4Fe-4S] cluster as a cofactor.

It catalyses the reaction (2R,3S)-3-isopropylmalate = (2S)-2-isopropylmalate. The protein operates within amino-acid biosynthesis; L-leucine biosynthesis; L-leucine from 3-methyl-2-oxobutanoate: step 2/4. Functionally, catalyzes the isomerization between 2-isopropylmalate and 3-isopropylmalate, via the formation of 2-isopropylmaleate. The chain is 3-isopropylmalate dehydratase large subunit from Staphylococcus haemolyticus (strain JCSC1435).